A 170-amino-acid chain; its full sequence is MSQKVAKEGPRLSKNQKFSEHFSIHCCPPFTFLNSKREIVDRKYSICKSGCFYQKKEEDWICCACQKTSRRATSPQKPKHQPAASPVVVRAPPAKPKSPPRPAKPRSPPIPAKPRSPSRTERQPRPRPEVRPPPAKQKPPQKSKQPARSSPLRGPGTSRGGSPTRAPRFW.

The tract at residues 69 to 170 (SRRATSPQKP…GSPTRAPRFW (102 aa)) is disordered. The span at 82–92 (PAASPVVVRAP) shows a compositional bias: low complexity. S85, S98, and S107 each carry phosphoserine. The stretch at 93-101 (PAKPKSPPR) is repeat 1. The span at 93 to 114 (PAKPKSPPRPAKPRSPPIPAKP) shows a compositional bias: pro residues. The 3 X 9 AA approximate tandem repeats stretch occupies residues 93 to 119 (PAKPKSPPRPAKPRSPPIPAKPRSPSR). A 2; half-length repeat occupies 105–110 (PRSPPI). The stretch at 111–119 (PAKPRSPSR) is repeat 3. Residues 118–130 (SRTERQPRPRPEV) are compositionally biased toward basic and acidic residues. A compositionally biased stretch (low complexity) spans 138–151 (KPPQKSKQPARSSP).

Expressed predominantly in oligodendrocytes, in CNS myelin of the cerebrum and spinal cord. No expression seen in sciatic nerve.

It localises to the cytoplasm. The protein localises to the perinuclear region. Its function is as follows. May play a role in compacting or stabilizing the myelin sheath, possibly by binding the negatively charged acidic phospholipids of the cytoplasmic membrane. In Rattus norvegicus (Rat), this protein is Myelin-associated oligodendrocyte basic protein (Mobp).